The following is a 309-amino-acid chain: Porphobilinogen deaminase (309 aa).

Cysteine 241 is modified (S-(dipyrrolylmethanemethyl)cysteine).

This sequence belongs to the HMBS family. Monomer. Requires dipyrromethane as cofactor.

The catalysed reaction is 4 porphobilinogen + H2O = hydroxymethylbilane + 4 NH4(+). It functions in the pathway porphyrin-containing compound metabolism; protoporphyrin-IX biosynthesis; coproporphyrinogen-III from 5-aminolevulinate: step 2/4. Its function is as follows. Tetrapolymerization of the monopyrrole PBG into the hydroxymethylbilane pre-uroporphyrinogen in several discrete steps. The protein is Porphobilinogen deaminase of Bacillus cereus (strain ATCC 10987 / NRS 248).